The sequence spans 414 residues: MSWDQVWIDINIATMSPNISEPYGAITDAALAVQDGKIAWVGKRSDLPEFDVFATPIYKGKGGWITPGLIDAHTHLVFAGNRANEFELRLNGASYEEIARSGGGIISTVNACREADEAELFELGRQRLNALAKEGVTTVEIKSGYGLDIETELKILRVARELGKHHHVDVKTTFLGAHAIPPEYKDSPGSTERSDAYVDLVINEMLPKVIAENLADAVDVFCENIAFNLEQTERVLSAAKDAGLDIKLHAEQLSNMGGSAMAARLGAKSVDHIEYLDEDGVKALSESGTCATILPGAFYFLRETQHPPIDLLRKYKVPMVVASDYNPGSSPLCSSLLMLNMACTLLRLTPEEALAGMTRNAAKALGIEDQVGVIEVGMTADFCMWNISTPAELAYTYGVASCVDVVKNGHLVHQ.

Fe(3+) contacts are provided by His-73 and His-75. 2 residues coordinate Zn(2+): His-73 and His-75. The 4-imidazolone-5-propanoate site is built by Arg-82, Tyr-145, and His-178. Residue Tyr-145 participates in N-formimidoyl-L-glutamate binding. His-249 provides a ligand contact to Fe(3+). His-249 provides a ligand contact to Zn(2+). Gln-252 contacts 4-imidazolone-5-propanoate. Asp-324 is a Fe(3+) binding site. Asp-324 contributes to the Zn(2+) binding site. The N-formimidoyl-L-glutamate site is built by Asn-326 and Gly-328. Ser-329 is a binding site for 4-imidazolone-5-propanoate.

The protein belongs to the metallo-dependent hydrolases superfamily. HutI family. Requires Zn(2+) as cofactor. Fe(3+) serves as cofactor.

The protein resides in the cytoplasm. The enzyme catalyses 4-imidazolone-5-propanoate + H2O = N-formimidoyl-L-glutamate. The protein operates within amino-acid degradation; L-histidine degradation into L-glutamate; N-formimidoyl-L-glutamate from L-histidine: step 3/3. Its function is as follows. Catalyzes the hydrolytic cleavage of the carbon-nitrogen bond in imidazolone-5-propanoate to yield N-formimidoyl-L-glutamate. It is the third step in the universal histidine degradation pathway. The protein is Imidazolonepropionase of Shewanella pealeana (strain ATCC 700345 / ANG-SQ1).